A 219-amino-acid polypeptide reads, in one-letter code: Phosphatidylserine decarboxylase proenzyme (219 aa).

Catalysis depends on Ser-188, which acts as the Schiff-base intermediate with substrate; via pyruvic acid. Ser-188 carries the post-translational modification Pyruvic acid (Ser); by autocatalysis.

It belongs to the phosphatidylserine decarboxylase family. PSD-A subfamily. In terms of assembly, heterodimer of a large membrane-associated beta subunit and a small pyruvoyl-containing alpha subunit. The cofactor is pyruvate. Is synthesized initially as an inactive proenzyme. Formation of the active enzyme involves a self-maturation process in which the active site pyruvoyl group is generated from an internal serine residue via an autocatalytic post-translational modification. Two non-identical subunits are generated from the proenzyme in this reaction, and the pyruvate is formed at the N-terminus of the alpha chain, which is derived from the carboxyl end of the proenzyme. The post-translation cleavage follows an unusual pathway, termed non-hydrolytic serinolysis, in which the side chain hydroxyl group of the serine supplies its oxygen atom to form the C-terminus of the beta chain, while the remainder of the serine residue undergoes an oxidative deamination to produce ammonia and the pyruvoyl prosthetic group on the alpha chain.

It is found in the cell membrane. The enzyme catalyses a 1,2-diacyl-sn-glycero-3-phospho-L-serine + H(+) = a 1,2-diacyl-sn-glycero-3-phosphoethanolamine + CO2. The protein operates within phospholipid metabolism; phosphatidylethanolamine biosynthesis; phosphatidylethanolamine from CDP-diacylglycerol: step 2/2. Functionally, catalyzes the formation of phosphatidylethanolamine (PtdEtn) from phosphatidylserine (PtdSer). The chain is Phosphatidylserine decarboxylase proenzyme from Citrifermentans bemidjiense (strain ATCC BAA-1014 / DSM 16622 / JCM 12645 / Bem) (Geobacter bemidjiensis).